The following is a 529-amino-acid chain: DNA-binding protein (529 aa).

Residues 1–17 (MASREEEQRETTPERGR) are compositionally biased toward basic and acidic residues. Disordered regions lie at residues 1–107 (MASR…IVDS) and 125–166 (PVLI…AESE). The span at 129–139 (KHGKGGKRTVR) shows a compositional bias: basic residues. The span at 155–165 (EEEEEPSEAES) shows a compositional bias: acidic residues. Position 195 is a phosphotyrosine; by host (Y195). Zn(2+)-binding residues include C284 and H286. A flexible loop region spans residues 297-331 (IEMDVTSENGQRALKEQSSKAKIVKNRWGRNVVQI). Zn(2+) contacts are provided by C339, C355, C396, C398, C450, and C467. The tract at residues 513–529 (VSLPVAHSDARQNPFDF) is C-terminal arm, DBP binding.

The protein belongs to the adenoviridae E2A DNA-binding protein family. As to quaternary structure, homomultimerizes on viral ssDNA bound to pTP. Forms a initiation complex with viral polymerase, pTP and hosts NFIA and POU2F1/OCT1. Interacts with host SRCAP.

The protein resides in the host nucleus. Functionally, plays a role in the elongation phase of viral strand displacement replication by unwinding the template in an ATP-independent fashion, employing its capacity to form multimers. Also enhances the rate of initiation. Released from template upon second strand synthesis. Assembles in complex with viral pTP, viral pol, host NFIA and host POU2F1/OCT1 on viral origin of replication. Covers the whole ssDNA genome during synthesis. The complementary strand synthesis induces its relese from DNA template. May inhibit cellular transcription mediated by the interaction between host SRCAP and CBP. The polypeptide is DNA-binding protein (Human adenovirus C serotype 5 (HAdV-5)).